Reading from the N-terminus, the 489-residue chain is MSKEVRVRYAPSPTGHLHIGNARTALFNYLYAKHFDGKFIIRTEDTDDKRNVEGGEESQLKYLKWLGLQWDEGADIGGEYGPYRQTERLDIYQEYLNELFAKNLAYKCYMTEDELEAEREEQRQNGQVPKYSGAHRDLTPEQIEQFEAEGRQPSIRFRVPENTTYTFNDLVRGKITFESSDFGDWVIVKKNGIPTYNFAVAIDDHLMKISDVLRGEEHISNTPKQMMIFDAFGWEAPRYGHMTLILNEERKKLSKRDEHILQFIEQYRNLGYLPEAMFNFISLLGWSPVGEEEMFTQAQLIEIFDPERLSTSAAIFDQHKLKWMNNEYIKAADLDRVIDLALPHLIKAGKLSEDMDDETRQWAENVISLYREQLRYGAEIVELTELFFQKEISYDEEAKEVLNGEQVPEVLQVFTDKLIHLESFDKDAIKAQFKATQKETGHRGKKLFMPIRVATTGQMHGPELPFAIELLGRDIILNRLDKLLKEMGA.

Residues 11-21 (PSPTGHLHIGN) carry the 'HIGH' region motif. A 'KMSKS' region motif is present at residues 252-256 (KLSKR). An ATP-binding site is contributed by Lys-255.

This sequence belongs to the class-I aminoacyl-tRNA synthetase family. Glutamate--tRNA ligase type 1 subfamily. As to quaternary structure, monomer.

It localises to the cytoplasm. It carries out the reaction tRNA(Glu) + L-glutamate + ATP = L-glutamyl-tRNA(Glu) + AMP + diphosphate. Its function is as follows. Catalyzes the attachment of glutamate to tRNA(Glu) in a two-step reaction: glutamate is first activated by ATP to form Glu-AMP and then transferred to the acceptor end of tRNA(Glu). This is Glutamate--tRNA ligase from Oceanobacillus iheyensis (strain DSM 14371 / CIP 107618 / JCM 11309 / KCTC 3954 / HTE831).